We begin with the raw amino-acid sequence, 190 residues long: Protein GrpE (190 aa).

A compositionally biased stretch (basic and acidic residues) spans 1–10 (MKKHVTEEQK). Residues 1-42 (MKKHVTEEQKTSAAPEAEQASPESSAAEAATPEERISRLEEQ) form a disordered region. Over residues 12–30 (SAAPEAEQASPESSAAEAA) the composition is skewed to low complexity. Over residues 32 to 42 (PEERISRLEEQ) the composition is skewed to basic and acidic residues.

Belongs to the GrpE family. Homodimer.

Its subcellular location is the cytoplasm. Participates actively in the response to hyperosmotic and heat shock by preventing the aggregation of stress-denatured proteins, in association with DnaK and GrpE. It is the nucleotide exchange factor for DnaK and may function as a thermosensor. Unfolded proteins bind initially to DnaJ; upon interaction with the DnaJ-bound protein, DnaK hydrolyzes its bound ATP, resulting in the formation of a stable complex. GrpE releases ADP from DnaK; ATP binding to DnaK triggers the release of the substrate protein, thus completing the reaction cycle. Several rounds of ATP-dependent interactions between DnaJ, DnaK and GrpE are required for fully efficient folding. In Pelobacter propionicus (strain DSM 2379 / NBRC 103807 / OttBd1), this protein is Protein GrpE.